Here is a 156-residue protein sequence, read N- to C-terminus: Small ribosomal subunit protein uS7 (156 aa).

This sequence belongs to the universal ribosomal protein uS7 family. As to quaternary structure, part of the 30S ribosomal subunit. Contacts proteins S9 and S11.

One of the primary rRNA binding proteins, it binds directly to 16S rRNA where it nucleates assembly of the head domain of the 30S subunit. Is located at the subunit interface close to the decoding center, probably blocks exit of the E-site tRNA. The protein is Small ribosomal subunit protein uS7 of Mycobacterium sp. (strain JLS).